A 422-amino-acid polypeptide reads, in one-letter code: Histidine--tRNA ligase (422 aa).

It belongs to the class-II aminoacyl-tRNA synthetase family. In terms of assembly, homodimer.

The protein resides in the cytoplasm. The enzyme catalyses tRNA(His) + L-histidine + ATP = L-histidyl-tRNA(His) + AMP + diphosphate + H(+). This Vesicomyosocius okutanii subsp. Calyptogena okutanii (strain HA) protein is Histidine--tRNA ligase.